A 400-amino-acid polypeptide reads, in one-letter code: Arrestin, lateral eye (400 aa).

It belongs to the arrestin family. Phosphorylated.

Plays an important role in the photoreceptor transduction. The chain is Arrestin, lateral eye from Limulus polyphemus (Atlantic horseshoe crab).